The primary structure comprises 266 residues: Phosphatidylglycerol--prolipoprotein diacylglyceryl transferase (266 aa).

7 helical membrane passes run 17–37, 56–76, 92–112, 120–140, 171–191, 199–219, and 233–253; these read LKIHWYGLMYLIGIGGAWLLA, LVFWVACGVILGGRLGYVLFY, WKGGMSFHGGLLGVMLAVWWF, FFQLMDFIAPLVPIGLGAGRI, PSQLYQFALEGVALFVILWLF, ASVSGLFVLCYGIFRFVVEFV, and WLTMGQVLCVPMVLAGIALMV. Residue arginine 139 participates in a 1,2-diacyl-sn-glycero-3-phospho-(1'-sn-glycerol) binding.

This sequence belongs to the Lgt family.

It localises to the cell inner membrane. It catalyses the reaction L-cysteinyl-[prolipoprotein] + a 1,2-diacyl-sn-glycero-3-phospho-(1'-sn-glycerol) = an S-1,2-diacyl-sn-glyceryl-L-cysteinyl-[prolipoprotein] + sn-glycerol 1-phosphate + H(+). The protein operates within protein modification; lipoprotein biosynthesis (diacylglyceryl transfer). Its function is as follows. Catalyzes the transfer of the diacylglyceryl group from phosphatidylglycerol to the sulfhydryl group of the N-terminal cysteine of a prolipoprotein, the first step in the formation of mature lipoproteins. In Pseudomonas aeruginosa (strain UCBPP-PA14), this protein is Phosphatidylglycerol--prolipoprotein diacylglyceryl transferase.